A 149-amino-acid polypeptide reads, in one-letter code: MSMSTSTEVIAHHWAFGIFLIVAIGLCCLMLVGAWFLGGRARARYKNTPFESGIDSVGTARLRLSAKFYLVAMFFVIFDVEALYLFAWSTSVREVGWLGFIEAAIFILVLLAGLVYLVRIGALEWTPSRSRRERLNTEEAGSLTNRHTQ.

The next 3 helical transmembrane spans lie at 16 to 36 (FGIFLIVAIGLCCLMLVGAWF), 68 to 88 (FYLVAMFFVIFDVEALYLFAW), and 98 to 118 (LGFIEAAIFILVLLAGLVYLV).

It belongs to the complex I subunit 3 family. In terms of assembly, NDH-1 is composed of 13 different subunits. Subunits NuoA, H, J, K, L, M, N constitute the membrane sector of the complex.

Its subcellular location is the cell inner membrane. The enzyme catalyses a quinone + NADH + 5 H(+)(in) = a quinol + NAD(+) + 4 H(+)(out). NDH-1 shuttles electrons from NADH, via FMN and iron-sulfur (Fe-S) centers, to quinones in the respiratory chain. The immediate electron acceptor for the enzyme in this species is believed to be ubiquinone. Couples the redox reaction to proton translocation (for every two electrons transferred, four hydrogen ions are translocated across the cytoplasmic membrane), and thus conserves the redox energy in a proton gradient. This chain is NADH-quinone oxidoreductase subunit A, found in Cronobacter sakazakii (strain ATCC BAA-894) (Enterobacter sakazakii).